The sequence spans 466 residues: Probable fibrosin-1 (466 aa).

Residue Lys8 forms a Glycyl lysine isopeptide (Lys-Gly) (interchain with G-Cter in SUMO2) linkage. 2 positions are modified to asymmetric dimethylarginine: Arg229 and Arg239. Disordered stretches follow at residues 236-315 (AWVR…AAAA) and 410-466 (LLYS…RADR). Basic and acidic residues predominate over residues 248–272 (GSDKERPMERREPSVTKEEKDRDLP). A Phosphoserine modification is found at Ser281. Basic and acidic residues predominate over residues 288–311 (RAGEEGARPAKESVRVKEERKEEA). Positions 442 to 459 (APPPLVPAPRPSSPPRAP) are enriched in pro residues.

The protein is Probable fibrosin-1 (Fbrs) of Mus musculus (Mouse).